The following is a 120-amino-acid chain: Fluoride-specific ion channel FluC 1 (120 aa).

Helical transmembrane passes span 3–23 and 42–62; these read ALLT…LNCA and LGCL…VAAL. 2 residues coordinate Na(+): glycine 69 and threonine 72. A helical membrane pass occupies residues 99–119; it reads ANLAAGVGAAVLGMAAVGWFL.

It belongs to the fluoride channel Fluc/FEX (TC 1.A.43) family.

It localises to the cell membrane. It catalyses the reaction fluoride(in) = fluoride(out). Its activity is regulated as follows. Na(+) is not transported, but it plays an essential structural role and its presence is essential for fluoride channel function. Fluoride-specific ion channel. Important for reducing fluoride concentration in the cell, thus reducing its toxicity. The sequence is that of Fluoride-specific ion channel FluC 1 from Thermobifida fusca (strain YX).